The chain runs to 131 residues: Holo-[acyl-carrier-protein] synthase (131 aa).

Positions 8 and 63 each coordinate Mg(2+).

It belongs to the P-Pant transferase superfamily. AcpS family. Mg(2+) serves as cofactor.

The protein resides in the cytoplasm. The catalysed reaction is apo-[ACP] + CoA = holo-[ACP] + adenosine 3',5'-bisphosphate + H(+). Functionally, transfers the 4'-phosphopantetheine moiety from coenzyme A to a Ser of acyl-carrier-protein. The protein is Holo-[acyl-carrier-protein] synthase of Shewanella pealeana (strain ATCC 700345 / ANG-SQ1).